A 139-amino-acid polypeptide reads, in one-letter code: uncharacterized protein (139 aa).

A helical membrane pass occupies residues 22–38 (SVMSVCFMTMSATVLPI).

The protein localises to the membrane. This is an uncharacterized protein from Saccharomyces cerevisiae (strain ATCC 204508 / S288c) (Baker's yeast).